The chain runs to 1231 residues: Cohesin subunit SA-2 (1231 aa).

M1 bears the N-acetylmethionine mark. A disordered region spans residues 1–75; that stretch reads MIAAPEIPTD…GSNRMNGHHQ (75 aa). The span at 36–48 shows a compositional bias: basic residues; the sequence is KQGKGKTCKKGKK. Residues 293 to 378 form the SCD domain; the sequence is FVHRYRDAIA…SRFKDRIVSM (86 aa). K607 carries the N6-acetyllysine modification. Phosphoserine occurs at positions 1058, 1061, 1064, and 1065. The disordered stretch occupies residues 1062 to 1087; sequence GMSSRGSTVRSKKSKPSTGKRKVVEG. The span at 1071–1082 shows a compositional bias: basic residues; sequence RSKKSKPSTGKR. Position 1112 is a phosphothreonine (T1112). S1177 and S1178 each carry phosphoserine.

This sequence belongs to the SCC3 family. As to quaternary structure, interacts directly with RAD21 in cohesin complex. Cohesin complexes are composed of a heterodimer between a SMC1 protein (SMC1A or SMC1B) and SMC3, which are attached via their hinge domain, and RAD21 which link them at their heads, and one STAG protein (STAG1, STAG2 or STAG3). In cohesin complexes, STAG2 is mutually exclusive with STAG1 and STAG3. In terms of processing, phosphorylated by PLK1. The large dissociation of cohesin from chromosome arms during prophase is partly due to its phosphorylation.

The protein localises to the nucleus. The protein resides in the chromosome. It is found in the centromere. Its function is as follows. Component of cohesin complex, a complex required for the cohesion of sister chromatids after DNA replication. The cohesin complex apparently forms a large proteinaceous ring within which sister chromatids can be trapped. At anaphase, the complex is cleaved and dissociates from chromatin, allowing sister chromatids to segregate. The cohesin complex may also play a role in spindle pole assembly during mitosis. The sequence is that of Cohesin subunit SA-2 (Stag2) from Mus musculus (Mouse).